Consider the following 498-residue polypeptide: Early growth response protein 1 (498 aa).

Disordered stretches follow at residues 137-203 (NASP…TASI) and 287-308 (PSRMRKYPNRPSKTPPHERPYA). The segment covering 139–163 (SPSSAPSSSPSSSSSSSQSPPLSCS) has biased composition (low complexity). Residues 179–202 (FPNSSPELFPDQSPQPFQNASTAS) are compositionally biased toward polar residues. 3 consecutive C2H2-type zinc fingers follow at residues 307 to 331 (YACPVESCDRRFSRSDELTRHIRIH), 337 to 359 (FQCRICMRNFSRSDHLTTHIRTH), and 365 to 387 (FACDICGRKFARSDERKRHTKIH). Positions 378–422 (DERKRHTKIHLRQKDKKADKATPVSVASPVSSYSPSASTSYPSPV) are disordered. Residues 382 to 392 (RHTKIHLRQKD) are compositionally biased toward basic residues. A compositionally biased stretch (low complexity) spans 398 to 422 (ATPVSVASPVSSYSPSASTSYPSPV).

It belongs to the EGR C2H2-type zinc-finger protein family.

It is found in the nucleus. It localises to the cytoplasm. Its function is as follows. Transcriptional regulator. Recognizes and binds to the DNA sequence 5'-GCG(T/G)GGGCG-3'(EGR-site) in the promoter region of target genes. Binds double-stranded target DNA, irrespective of the cytosine methylation status. Regulates the transcription of numerous target genes, and thereby plays an important role in regulating the response to growth factors, DNA damage, and ischemia. Plays a role in the regulation of cell survival, proliferation and cell death. Mediates responses to ischemia and hypoxia; regulates the expression of proteins that are involved in inflammatory processes. Plays a role in regulating the expression of circadian clock genes. In Xenopus tropicalis (Western clawed frog), this protein is Early growth response protein 1.